A 385-amino-acid polypeptide reads, in one-letter code: Cytochrome b (385 aa).

4 helical membrane-spanning segments follow: residues 32–52 (MGSL…FMAM), 76–98 (YILR…MHMA), 113–133 (LWNV…LGYC), and 179–199 (FFAL…MHLM). His82 and His96 together coordinate heme b. Heme b contacts are provided by His183 and His197. His202 lines the a ubiquinone pocket. 4 helical membrane-spanning segments follow: residues 225–245 (FIFK…LFVF), 289–309 (LLGV…PFTD), 321–341 (LSKF…QIGA), and 348–368 (YVLM…IIVP).

The protein belongs to the cytochrome b family. As to quaternary structure, fungal cytochrome b-c1 complex contains 10 subunits; 3 respiratory subunits, 2 core proteins and 5 low-molecular weight proteins. Cytochrome b-c1 complex is a homodimer. The cofactor is heme b.

Its subcellular location is the mitochondrion inner membrane. In terms of biological role, component of the ubiquinol-cytochrome c reductase complex (complex III or cytochrome b-c1 complex) that is part of the mitochondrial respiratory chain. The b-c1 complex mediates electron transfer from ubiquinol to cytochrome c. Contributes to the generation of a proton gradient across the mitochondrial membrane that is then used for ATP synthesis. In Saccharomyces paradoxus (Yeast), this protein is Cytochrome b (COB).